The chain runs to 1024 residues: Multidrug resistance protein MdtC (1024 aa).

The next 12 helical transmembrane spans lie at 12–32 (VATTLLTLAITLSGIIGFSLL), 333–353 (EVERSLVIAVALVILVVFIFL), 360–380 (LIPAVAVPVSLIGTFAAMYLC), 387–407 (LSLMALTIATGFVVDDAIVVL), 435–455 (VLSMSISLVAVFIPLLLMAGL), 469–489 (VAIGISLVISLTLTPMMCAWL), 528–548 (WVMVVLLSTIALNVWLYISIP), 853–873 (LWLIMAAIATVYIVLGILYES), 875–895 (VHPLTILSTLPSAGVGALLAL), 897–917 (LFDAPFSLIALIGIMLLIGIV), 953–973 (PIIMTTLAALFGALPLVLSSG), and 984–1004 (ITIVGGLVVSQLLTLYTTPVI).

The protein belongs to the resistance-nodulation-cell division (RND) (TC 2.A.6) family. MdtC subfamily. Part of a tripartite efflux system composed of MdtA, MdtB and MdtC. MdtC forms a heteromultimer with MdtB.

It localises to the cell inner membrane. The polypeptide is Multidrug resistance protein MdtC (Yersinia pestis bv. Antiqua (strain Antiqua)).